Reading from the N-terminus, the 223-residue chain is Coiled-coil domain-containing protein 124 (223 aa).

Residues 1–126 form a disordered region; that stretch reads MPKKFQGENT…AEKAKSHLEV (126 aa). Basic and acidic residues-rich tracts occupy residues 18–74 and 99–126; these read RRAE…QRLL and QIED…HLEV. Positions 44-82 form a coiled coil; sequence KHVMRKEQRKEEKEKRRLDQLERKKETQRLLEEEDSKLK. Serine 141 and serine 194 each carry phosphoserine. A disordered region spans residues 204 to 223; it reads WLRSPDNPMNQRAVPFNAPK.

The protein belongs to the CCDC124 family. As to quaternary structure, associates with translationally inactive ribosomes in the nonrotated state. Interacts with RASGEF1B.

It localises to the cytoplasm. The protein resides in the cytoskeleton. It is found in the microtubule organizing center. Its subcellular location is the centrosome. The protein localises to the midbody. Functionally, ribosome-binding protein involved in ribosome hibernation: associates with translationally inactive ribosomes and stabilizes the nonrotated conformation of the 80S ribosome, thereby promoting ribosome preservation and storage. Also required for proper progression of late cytokinetic stages. In Pongo abelii (Sumatran orangutan), this protein is Coiled-coil domain-containing protein 124 (CCDC124).